A 1940-amino-acid polypeptide reads, in one-letter code: Myosin-2 (1940 aa).

The 50-residue stretch at 33-82 (DAKTSVFVAEPKESFVKGTVQSREGGKVTVKTEAGATLTVKEDQVFPMNP) folds into the Myosin N-terminal SH3-like domain. A phosphothreonine mark is found at T64 and T69. Positions 86–783 (DKIEDMAMMT…LLGLLEEMRD (698 aa)) constitute a Myosin motor domain. K130 carries the N6,N6,N6-trimethyllysine modification. 179-186 (GESGAGKT) serves as a coordination point for ATP. Y389 carries the phosphotyrosine modification. S392 carries the phosphoserine modification. Residue T419 is modified to Phosphothreonine. S625 carries the post-translational modification Phosphoserine. The tract at residues 660–682 (LNKLMTNLRSTHPHFVRCIIPNE) is actin-binding. H758 is modified (pros-methylhistidine). The tract at residues 762 to 776 (KFGHTKVFFKAGLLG) is actin-binding. The IQ domain maps to 786–815 (LAQLITRTQARCRGFLARVEYQKMVERRES). Residues 844 to 1940 (LLKSAETEKE…EVHTKVISEE (1097 aa)) are a coiled coil. 4 positions are modified to phosphoserine: S1093, S1097, S1163, and S1238. The disordered stretch occupies residues 1154 to 1173 (RLEEAGGATSAQIEMNKKRE). A Phosphothreonine modification is found at T1242. The residue at position 1244 (S1244) is a Phosphoserine. T1256 is modified (phosphothreonine). S1262 carries the phosphoserine modification. T1287 bears the Phosphothreonine mark. A phosphoserine mark is found at S1289, S1293, S1304, and S1307. A Phosphotyrosine modification is found at Y1465. T1468 carries the post-translational modification Phosphothreonine. S1475 is modified (phosphoserine). Y1493 is modified (phosphotyrosine). S1496 is modified (phosphoserine). Residue T1502 is modified to Phosphothreonine. Residue S1515 is modified to Phosphoserine. At T1518 the chain carries Phosphothreonine. 6 positions are modified to phosphoserine: S1543, S1555, S1575, S1601, S1715, and S1727. T1731 and T1737 each carry phosphothreonine. S1740 carries the phosphoserine modification. Positions 1884–1920 (KRQAEEAEEQSNTNLSKFRKLQHELEEAEERADIAES) are disordered.

This sequence belongs to the TRAFAC class myosin-kinesin ATPase superfamily. Myosin family. Muscle myosin is a hexameric protein that consists of 2 heavy chain subunits (MHC), 2 alkali light chain subunits (MLC) and 2 regulatory light chain subunits (MLC-2). Interacts with GCSAM.

It localises to the cytoplasm. The protein resides in the myofibril. Its function is as follows. Myosins are actin-based motor molecules with ATPase activity essential for muscle contraction. The polypeptide is Myosin-2 (MYH2) (Canis lupus familiaris (Dog)).